Consider the following 776-residue polypeptide: DNA topoisomerase 1 (776 aa).

One can recognise a Toprim domain in the interval 1–111 (MKLVIVESPA…VESDDFFKRV (111 aa)). 2 residues coordinate Mg(2+): Glu7 and Asp80. A Topo IA-type catalytic domain is found at 132–568 (DTNLVNAQQA…FWRGFNHNIE (437 aa)). An interaction with DNA region spans residues 166–171 (SAGRVQ). Tyr304 acts as the O-(5'-phospho-DNA)-tyrosine intermediate in catalysis. The C4-type zinc finger occupies 600–627 (CPSCKTGQLSLKLGKFGAFLACSNYPEC).

Belongs to the type IA topoisomerase family. In terms of assembly, monomer. Mg(2+) serves as cofactor.

It catalyses the reaction ATP-independent breakage of single-stranded DNA, followed by passage and rejoining.. Releases the supercoiling and torsional tension of DNA, which is introduced during the DNA replication and transcription, by transiently cleaving and rejoining one strand of the DNA duplex. Introduces a single-strand break via transesterification at a target site in duplex DNA. The scissile phosphodiester is attacked by the catalytic tyrosine of the enzyme, resulting in the formation of a DNA-(5'-phosphotyrosyl)-enzyme intermediate and the expulsion of a 3'-OH DNA strand. The free DNA strand then undergoes passage around the unbroken strand, thus removing DNA supercoils. Finally, in the religation step, the DNA 3'-OH attacks the covalent intermediate to expel the active-site tyrosine and restore the DNA phosphodiester backbone. The polypeptide is DNA topoisomerase 1 (Rickettsia prowazekii (strain Madrid E)).